Here is a 248-residue protein sequence, read N- to C-terminus: 2,3-bisphosphoglycerate-dependent phosphoglycerate mutase (248 aa).

Substrate contacts are provided by residues 8-15 (RHGESTWN), 21-22 (TG), Arg-60, 87-90 (ERHY), Lys-98, 114-115 (RR), and 183-184 (GN). Residue His-9 is the Tele-phosphohistidine intermediate of the active site. The active-site Proton donor/acceptor is Glu-87.

Belongs to the phosphoglycerate mutase family. BPG-dependent PGAM subfamily. Homodimer.

It catalyses the reaction (2R)-2-phosphoglycerate = (2R)-3-phosphoglycerate. Its pathway is carbohydrate degradation; glycolysis; pyruvate from D-glyceraldehyde 3-phosphate: step 3/5. Its function is as follows. Catalyzes the interconversion of 2-phosphoglycerate and 3-phosphoglycerate. The sequence is that of 2,3-bisphosphoglycerate-dependent phosphoglycerate mutase from Paraburkholderia phymatum (strain DSM 17167 / CIP 108236 / LMG 21445 / STM815) (Burkholderia phymatum).